We begin with the raw amino-acid sequence, 286 residues long: Shikimate dehydrogenase (NADP(+)) (286 aa).

Shikimate-binding positions include 20–22 (SLS) and serine 67. The Proton acceptor role is filled by lysine 71. Asparagine 92 and aspartate 107 together coordinate shikimate. Residues 131–135 (GGGGA) and alanine 230 each bind NADP(+). Residue tyrosine 232 coordinates shikimate. Residue glycine 253 coordinates NADP(+).

This sequence belongs to the shikimate dehydrogenase family. Homodimer.

The enzyme catalyses shikimate + NADP(+) = 3-dehydroshikimate + NADPH + H(+). It functions in the pathway metabolic intermediate biosynthesis; chorismate biosynthesis; chorismate from D-erythrose 4-phosphate and phosphoenolpyruvate: step 4/7. In terms of biological role, involved in the biosynthesis of the chorismate, which leads to the biosynthesis of aromatic amino acids. Catalyzes the reversible NADPH linked reduction of 3-dehydroshikimate (DHSA) to yield shikimate (SA). The chain is Shikimate dehydrogenase (NADP(+)) from Lactococcus lactis subsp. cremoris (strain SK11).